We begin with the raw amino-acid sequence, 855 residues long: Glucans biosynthesis glucosyltransferase H (855 aa).

6 consecutive transmembrane segments (helical) span residues 142 to 162 (ILLT…KGIL), 196 to 216 (ILVL…TALM), 515 to 535 (VFLT…FLVL), 572 to 592 (LFST…ILIW), 606 to 626 (TLSM…RMIF), and 682 to 702 (FLWW…VSVI).

It belongs to the glycosyltransferase 2 family. OpgH subfamily.

The protein resides in the cell inner membrane. It functions in the pathway glycan metabolism; osmoregulated periplasmic glucan (OPG) biosynthesis. In terms of biological role, involved in the biosynthesis of osmoregulated periplasmic glucans (OPGs). This is Glucans biosynthesis glucosyltransferase H from Pseudomonas entomophila (strain L48).